The following is a 106-amino-acid chain: Putative double-stranded DNA mimic protein VIBHAR_02752 (106 aa).

It belongs to the putative dsDNA mimic protein family.

Functionally, may act as a double-stranded DNA (dsDNA) mimic. Probably regulates the activity of a dsDNA-binding protein. In Vibrio campbellii (strain ATCC BAA-1116), this protein is Putative double-stranded DNA mimic protein VIBHAR_02752.